The primary structure comprises 263 residues: Hydroxyethylthiazole kinase 1 (263 aa).

A substrate-binding site is contributed by Met-42. ATP-binding residues include Lys-118 and Thr-164. Residue Gly-191 participates in substrate binding.

Belongs to the Thz kinase family. Mg(2+) is required as a cofactor.

It catalyses the reaction 5-(2-hydroxyethyl)-4-methylthiazole + ATP = 4-methyl-5-(2-phosphooxyethyl)-thiazole + ADP + H(+). It functions in the pathway cofactor biosynthesis; thiamine diphosphate biosynthesis; 4-methyl-5-(2-phosphoethyl)-thiazole from 5-(2-hydroxyethyl)-4-methylthiazole: step 1/1. Catalyzes the phosphorylation of the hydroxyl group of 4-methyl-5-beta-hydroxyethylthiazole (THZ). This is Hydroxyethylthiazole kinase 1 from Clostridium botulinum (strain 657 / Type Ba4).